The chain runs to 174 residues: Pediocin PA-1 biosynthesis protein PedC (174 aa).

Functionally, probably involved in pediocin PA-1 biosynthesis. In Pediococcus acidilactici, this protein is Pediocin PA-1 biosynthesis protein PedC (pedC).